Consider the following 849-residue polypeptide: Coiled-coil domain-containing protein 87 (849 aa).

A coiled-coil region spans residues 387–415 (RHPAAGHRLEELEKMLRNLQEEEASGQWD).

Belongs to the CCDC87 family.

Its function is as follows. Plays a role in spermatogenesis, where it is important for normal sperm head morphology. Also required for the acrosome reaction and thus normal male fertility. The polypeptide is Coiled-coil domain-containing protein 87 (CCDC87) (Homo sapiens (Human)).